Consider the following 363-residue polypeptide: Pyrimidine monooxygenase RutA (363 aa).

Residues 49–50 (IK), N115, E124, 140–141 (RY), and S190 contribute to the FMN site.

Belongs to the NtaA/SnaA/DszA monooxygenase family. RutA subfamily.

It catalyses the reaction uracil + FMNH2 + NADH + O2 = (Z)-3-ureidoacrylate + FMN + NAD(+) + H2O + H(+). The enzyme catalyses thymine + FMNH2 + NADH + O2 = (Z)-2-methylureidoacrylate + FMN + NAD(+) + H2O + H(+). Functionally, catalyzes the pyrimidine ring opening between N-3 and C-4 by an unusual flavin hydroperoxide-catalyzed mechanism, adding oxygen atoms in the process to yield ureidoacrylate peracid, that immediately reacts with FMN forming ureidoacrylate and FMN-N(5)-oxide. The FMN-N(5)-oxide reacts spontaneously with NADH to produce FMN. Requires the flavin reductase RutF to regenerate FMN in vivo. The protein is Pyrimidine monooxygenase RutA of Escherichia coli O103:H2 (strain 12009 / EHEC).